The sequence spans 448 residues: Methylenetetrahydrofolate--tRNA-(uracil-5-)-methyltransferase TrmFO (448 aa).

13–18 is an FAD binding site; sequence GAGLAG.

It belongs to the MnmG family. TrmFO subfamily. It depends on FAD as a cofactor.

The protein localises to the cytoplasm. The catalysed reaction is uridine(54) in tRNA + (6R)-5,10-methylene-5,6,7,8-tetrahydrofolate + NADH + H(+) = 5-methyluridine(54) in tRNA + (6S)-5,6,7,8-tetrahydrofolate + NAD(+). It catalyses the reaction uridine(54) in tRNA + (6R)-5,10-methylene-5,6,7,8-tetrahydrofolate + NADPH + H(+) = 5-methyluridine(54) in tRNA + (6S)-5,6,7,8-tetrahydrofolate + NADP(+). Catalyzes the folate-dependent formation of 5-methyl-uridine at position 54 (M-5-U54) in all tRNAs. The sequence is that of Methylenetetrahydrofolate--tRNA-(uracil-5-)-methyltransferase TrmFO from Streptococcus pyogenes serotype M3 (strain ATCC BAA-595 / MGAS315).